Here is a 364-residue protein sequence, read N- to C-terminus: Anthranilate phosphoribosyltransferase (364 aa).

The segment covering 1–10 has biased composition (polar residues); sequence MTSGPSQPFP. A disordered region spans residues 1-22; the sequence is MTSGPSQPFPSASGPDDGPSWP. 5-phospho-alpha-D-ribose 1-diphosphate contacts are provided by residues Gly101, 104–105, Thr109, 111–114, 129–137, and Gly141; these read GD, NLST, and KHGNRAASS. An anthranilate-binding site is contributed by Gly101. Residue Ser113 coordinates Mg(2+). Asn132 lines the anthranilate pocket. Residue Arg187 participates in anthranilate binding. The Mg(2+) site is built by Asp245 and Glu246.

This sequence belongs to the anthranilate phosphoribosyltransferase family. In terms of assembly, homodimer. It depends on Mg(2+) as a cofactor.

It catalyses the reaction N-(5-phospho-beta-D-ribosyl)anthranilate + diphosphate = 5-phospho-alpha-D-ribose 1-diphosphate + anthranilate. It functions in the pathway amino-acid biosynthesis; L-tryptophan biosynthesis; L-tryptophan from chorismate: step 2/5. Catalyzes the transfer of the phosphoribosyl group of 5-phosphorylribose-1-pyrophosphate (PRPP) to anthranilate to yield N-(5'-phosphoribosyl)-anthranilate (PRA). The protein is Anthranilate phosphoribosyltransferase of Mycolicibacterium smegmatis (strain ATCC 700084 / mc(2)155) (Mycobacterium smegmatis).